Reading from the N-terminus, the 119-residue chain is Large ribosomal subunit protein bL20 (119 aa).

The protein belongs to the bacterial ribosomal protein bL20 family.

Functionally, binds directly to 23S ribosomal RNA and is necessary for the in vitro assembly process of the 50S ribosomal subunit. It is not involved in the protein synthesizing functions of that subunit. The chain is Large ribosomal subunit protein bL20 from Xylella fastidiosa (strain 9a5c).